The following is a 206-amino-acid chain: Ribosomal RNA large subunit methyltransferase E (206 aa).

The S-adenosyl-L-methionine site is built by Gly-60, Trp-62, Asp-80, Asn-96, and Asp-121. The active-site Proton acceptor is the Lys-161.

Belongs to the class I-like SAM-binding methyltransferase superfamily. RNA methyltransferase RlmE family.

It is found in the cytoplasm. It carries out the reaction uridine(2552) in 23S rRNA + S-adenosyl-L-methionine = 2'-O-methyluridine(2552) in 23S rRNA + S-adenosyl-L-homocysteine + H(+). Specifically methylates the uridine in position 2552 of 23S rRNA at the 2'-O position of the ribose in the fully assembled 50S ribosomal subunit. This chain is Ribosomal RNA large subunit methyltransferase E, found in Francisella philomiragia subsp. philomiragia (strain ATCC 25017 / CCUG 19701 / FSC 153 / O#319-036).